The following is a 222-amino-acid chain: MKLEIPFDEEGIFLERKTRFTGIVSVGKERTQAHIHNTGRLPLLSPGKRVLLKRAKSERRKTKWDLLAVEYREEFVFVHSGYHSLVAERILGEMFPGARIEREKTSGNSVLDFLVDGKTFVEVKGCTFEENGVAMFPDAPTVRGKRHVEELIRCVESGFRALLLILVFLESRCFLPNRKVDPFFSEIFWHALSKGVDVCVFRLKYDGEYLHSMGNLPICEEV.

This sequence belongs to the SfsA family.

This is Sugar fermentation stimulation protein homolog from Thermotoga neapolitana (strain ATCC 49049 / DSM 4359 / NBRC 107923 / NS-E).